Here is a 99-residue protein sequence, read N- to C-terminus: DNA-binding protein HU (99 aa).

Positions R67–P86 are disordered.

Belongs to the bacterial histone-like protein family. As to quaternary structure, homodimer.

In terms of biological role, histone-like DNA-binding protein which is capable of wrapping DNA to stabilize it, and thus to prevent its denaturation under extreme environmental conditions. This Rickettsia conorii (strain ATCC VR-613 / Malish 7) protein is DNA-binding protein HU (hup).